Reading from the N-terminus, the 1027-residue chain is Circadian locomoter output cycles protein kaput (1027 aa).

The 51-residue stretch at 15 to 65 (LCRKSRNLSEKKRRDQFNSLVNDLSALISTSSRKMDKSTVLKSTIAFLKNH) folds into the bHLH domain. PAS domains follow at residues 88–160 (NDEY…VIEP) and 255–321 (REMS…ELRQ). Disordered stretches follow at residues 377–402 (RKEGQKSGNSNSITNNGSSKVIASTG), 443–575 (TSPA…QQLQ), 765–800 (QQMMMQQQQNLHTQHQHNLQQQHQSHSQLQQHTQQQ), 869–911 (TINP…NNED), and 926–1027 (SINF…GSSQ). A compositionally biased stretch (low complexity) spans 383 to 402 (SGNSNSITNNGSSKVIASTG). The segment covering 443–486 (TSPAVDSSPMWSASAVQPSGSCQINPLKTSRPASSYGNISSTGI) has biased composition (polar residues). 2 stretches are compositionally biased toward low complexity: residues 504–516 (SDSTSMSTDSVTS) and 552–575 (QQQQQHQNQQQQHQQHQQLQQQLQ). The tract at residues 780-1027 (QHNLQQQHQS…SPHTAPGSSQ (248 aa)) is implicated in the circadian rhythmicity. 2 stretches are compositionally biased toward low complexity: residues 871–909 (NPFNSSSNNNNQSYNGGSNLNNGNQNNNNRSSNPPQNNN) and 951–995 (SGSN…NQNQ). Over residues 1006-1027 (QMSQEQSQNLFNSPHTAPGSSQ) the composition is skewed to polar residues.

In terms of assembly, efficient DNA binding requires dimerization with another bHLH protein. Forms a heterodimer with Cycle. As to expression, widely expressed. Found in head, body, and appendage fractions.

The protein localises to the nucleus. In terms of biological role, circadian regulator that acts as a transcription factor and generates a rhythmic output with a period of about 24 hours. Oscillates in antiphase to the cycling observed for period (PER) and timeless (TIM). According to PubMed:9742131, reaches peak abundance within several hours of the dark-light transition at ZT0 (zeitgeber 0), whereas PubMed:9616122 describes bimodal oscillating expression with maximum at ZT5 and ZT23. Clock-cycle heterodimers activate cycling transcription of PER and TIM by binding to the E-box (5'-CACGTG-3') present in their promoters. Once induced, Period and Timeless block Clock's ability to transactivate their promoters. This is Circadian locomoter output cycles protein kaput (Clk) from Drosophila melanogaster (Fruit fly).